The following is a 415-amino-acid chain: Transcription factor gsfR2 (415 aa).

The zn(2)-C6 fungal-type DNA-binding region spans 9–36 (CITCVQSKRKCDQGLPKCQRCLAKNIHC). The tract at residues 65–91 (AEEPSRGCQLQRSPARPTSPTHSPHAN) is disordered. Positions 72–88 (CQLQRSPARPTSPTHSP) are enriched in polar residues.

It is found in the nucleus. In terms of biological role, transcription factor that regulates expression of the gene cluster that mediates the biosynthesis of Griseofulvin, an important antifungal drug that has been in use for a long time for treating dermatophyte infections. The sequence is that of Transcription factor gsfR2 from Penicillium aethiopicum.